The primary structure comprises 75 residues: UPF0352 protein VIBHAR_03027 (75 aa).

The protein belongs to the UPF0352 family.

The protein is UPF0352 protein VIBHAR_03027 of Vibrio campbellii (strain ATCC BAA-1116).